We begin with the raw amino-acid sequence, 507 residues long: Congo red hypersensitive protein 1 (507 aa).

The signal sequence occupies residues 1–22 (MKVLDLLTVLSASSLLSTFAAA). In terms of domain architecture, GH16 spans 34–260 (ASSTASCNPL…KVIVTDYSTG (227 aa)). The cysteines at positions 40 and 48 are disulfide-linked. An N-linked (GlcNAc...) asparagine glycan is attached at Asn-117. The active-site Nucleophile is the Glu-134. Glu-138 functions as the Proton donor in the catalytic mechanism. Chitin is bound at residue Glu-138. 2 N-linked (GlcNAc...) asparagine glycosylation sites follow: Asn-177 and Asn-201. Trp-219 and Thr-230 together coordinate chitin. Disordered regions lie at residues 329 to 368 (SSSA…SSKT) and 381 to 478 (SSFE…TNSV). 2 stretches are compositionally biased toward low complexity: residues 381-439 (SSFE…PVQD) and 451-477 (TSST…STNS). The GPI-anchor amidated asparagine moiety is linked to residue Asn-482. A propeptide spans 483 to 507 (GADLAQSLPREGKLFSVLVALLALL) (removed in mature form).

This sequence belongs to the glycosyl hydrolase 16 family. CRH1 subfamily. Post-translationally, the GPI-anchor is attached to the protein in the endoplasmic reticulum and serves to target the protein to the cell surface. There, the glucosamine-inositol phospholipid moiety is cleaved off and the GPI-modified mannoprotein is covalently attached via its lipidless GPI glycan remnant to the 1,6-beta-glucan of the outer cell wall layer.

The protein localises to the secreted. The protein resides in the cell wall. Its subcellular location is the membrane. It catalyses the reaction Random endo-hydrolysis of N-acetyl-beta-D-glucosaminide (1-&gt;4)-beta-linkages in chitin and chitodextrins.. Its function is as follows. Dual chitinase/transglycosylase that plays a role in cell wall architecture. Chitinase and transglycosylase activities are coupled. Required for the polysaccharide cross-linking at the septa and the cell wall. More specifically, transfers chitin to both beta(1-3)- and beta(1-6)glucan in the cell wall. The minimal number of intact hexopyranose units required in the molecule of the acceptor oligosaccharide is two and the effectivity of the acceptor increased with the increasing length of its oligosaccharide chain. The sequence is that of Congo red hypersensitive protein 1 from Saccharomyces cerevisiae (strain ATCC 204508 / S288c) (Baker's yeast).